A 70-amino-acid chain; its full sequence is NAD(P)H-quinone oxidoreductase subunit O (70 aa).

It belongs to the complex I NdhO subunit family. In terms of assembly, NDH-1 can be composed of about 15 different subunits; different subcomplexes with different compositions have been identified which probably have different functions.

The protein localises to the cellular thylakoid membrane. The enzyme catalyses a plastoquinone + NADH + (n+1) H(+)(in) = a plastoquinol + NAD(+) + n H(+)(out). It carries out the reaction a plastoquinone + NADPH + (n+1) H(+)(in) = a plastoquinol + NADP(+) + n H(+)(out). Functionally, NDH-1 shuttles electrons from an unknown electron donor, via FMN and iron-sulfur (Fe-S) centers, to quinones in the respiratory and/or the photosynthetic chain. The immediate electron acceptor for the enzyme in this species is believed to be plastoquinone. Couples the redox reaction to proton translocation, and thus conserves the redox energy in a proton gradient. Cyanobacterial NDH-1 also plays a role in inorganic carbon-concentration. The polypeptide is NAD(P)H-quinone oxidoreductase subunit O (Nostoc sp. (strain PCC 7120 / SAG 25.82 / UTEX 2576)).